The primary structure comprises 254 residues: Type III pantothenate kinase 2 (254 aa).

6–13 (DMGNSHIH) is a binding site for ATP. Residue 107 to 110 (GADR) participates in substrate binding. Residue Asp-109 is the Proton acceptor of the active site. Asp-130 provides a ligand contact to K(+). Residue Thr-133 participates in ATP binding. Thr-185 provides a ligand contact to substrate.

The protein belongs to the type III pantothenate kinase family. Homodimer. NH4(+) serves as cofactor. It depends on K(+) as a cofactor.

Its subcellular location is the cytoplasm. It catalyses the reaction (R)-pantothenate + ATP = (R)-4'-phosphopantothenate + ADP + H(+). It functions in the pathway cofactor biosynthesis; coenzyme A biosynthesis; CoA from (R)-pantothenate: step 1/5. Catalyzes the phosphorylation of pantothenate (Pan), the first step in CoA biosynthesis. This is Type III pantothenate kinase 2 from Francisella tularensis subsp. holarctica (strain LVS).